Consider the following 175-residue polypeptide: Translation initiation factor IF-3 (175 aa).

The protein belongs to the IF-3 family. In terms of assembly, monomer.

It localises to the cytoplasm. Functionally, IF-3 binds to the 30S ribosomal subunit and shifts the equilibrium between 70S ribosomes and their 50S and 30S subunits in favor of the free subunits, thus enhancing the availability of 30S subunits on which protein synthesis initiation begins. The protein is Translation initiation factor IF-3 of Chromobacterium violaceum (strain ATCC 12472 / DSM 30191 / JCM 1249 / CCUG 213 / NBRC 12614 / NCIMB 9131 / NCTC 9757 / MK).